Reading from the N-terminus, the 469-residue chain is Aspartyl/glutamyl-tRNA(Asn/Gln) amidotransferase subunit B (469 aa).

This sequence belongs to the GatB/GatE family. GatB subfamily. Heterotrimer of A, B and C subunits.

It carries out the reaction L-glutamyl-tRNA(Gln) + L-glutamine + ATP + H2O = L-glutaminyl-tRNA(Gln) + L-glutamate + ADP + phosphate + H(+). It catalyses the reaction L-aspartyl-tRNA(Asn) + L-glutamine + ATP + H2O = L-asparaginyl-tRNA(Asn) + L-glutamate + ADP + phosphate + 2 H(+). Functionally, allows the formation of correctly charged Asn-tRNA(Asn) or Gln-tRNA(Gln) through the transamidation of misacylated Asp-tRNA(Asn) or Glu-tRNA(Gln) in organisms which lack either or both of asparaginyl-tRNA or glutaminyl-tRNA synthetases. The reaction takes place in the presence of glutamine and ATP through an activated phospho-Asp-tRNA(Asn) or phospho-Glu-tRNA(Gln). This Methanococcus maripaludis (strain C5 / ATCC BAA-1333) protein is Aspartyl/glutamyl-tRNA(Asn/Gln) amidotransferase subunit B.